The following is a 620-amino-acid chain: UvrABC system protein C (620 aa).

Residues 13–92 (DKPGVYIMKN…IKKYSPRYNI (80 aa)) form the GIY-YIG domain. The UVR domain occupies 204–239 (TSIIKNLKLEMEKAAEELEFEKAAKIRDRILAIELI).

Belongs to the UvrC family. Interacts with UvrB in an incision complex.

Its subcellular location is the cytoplasm. Its function is as follows. The UvrABC repair system catalyzes the recognition and processing of DNA lesions. UvrC both incises the 5' and 3' sides of the lesion. The N-terminal half is responsible for the 3' incision and the C-terminal half is responsible for the 5' incision. In Clostridium perfringens (strain SM101 / Type A), this protein is UvrABC system protein C.